A 1062-amino-acid chain; its full sequence is SLIT-ROBO Rho GTPase-activating protein 1 (1062 aa).

The 296-residue stretch at 19–314 (SQVKEIRAQL…AVDNLEPRSD (296 aa)) folds into the F-BAR domain. Residues 352 to 382 (QAELMLRNQQLQSRLATLKIESEEVKKTTEA) are a coiled coil. A Phosphoserine modification is found at serine 416. The 191-residue stretch at 481-671 (GRRNSHARHQ…TIIIHHETIF (191 aa)) folds into the Rho-GAP domain. Positions 720–779 (CEPIEAIAKFDYVGRSARELSFKKGASLLLYHRASEDWWEGRHNGIDGLVPHQYIVVQDM) constitute an SH3 domain. Over residues 785-799 (DTLSQKADSEASSGP) the composition is skewed to polar residues. The disordered stretch occupies residues 785 to 931 (DTLSQKADSE…TGFNDHKPLD (147 aa)). Phosphoserine occurs at positions 812 and 894. Basic and acidic residues predominate over residues 899–908 (SRHDSLKKID). Serine 909 is subject to Phosphoserine. The span at 914-923 (RSTSSGQYTG) shows a compositional bias: polar residues. Residues 933–960 (ETIAQDIEETMNTALNELRELERQSTVK) are a coiled coil. A compositionally biased stretch (polar residues) spans 974–988 (KNSPTPATSTESLSP). Disordered regions lie at residues 974–1013 (KNSP…ETMS) and 1028–1062 (KPPA…SCTM). Serine 976 carries the phosphoserine modification. Threonine 978 carries the phosphothreonine modification. The segment covering 1004–1013 (STSSSSETMS) has biased composition (low complexity). Serine 1009 carries the post-translational modification Phosphoserine. The span at 1053-1062 (QGPTDKSCTM) shows a compositional bias: polar residues.

In terms of assembly, homodimer. Forms a heterooligomer with SRGAP2 and SRGAP3 through its F-BAR domain. Interacts with CDC42 and RHOA. Interacts with FASLG. Interacts (via SH3 domain) with ROBO1.

GTPase-activating protein for RhoA and Cdc42 small GTPases. Together with CDC42 seems to be involved in the pathway mediating the repulsive signaling of Robo and Slit proteins in neuronal migration. SLIT2, probably through interaction with ROBO1, increases the interaction of SRGAP1 with ROBO1 and inactivates CDC42. In Mus musculus (Mouse), this protein is SLIT-ROBO Rho GTPase-activating protein 1 (Srgap1).